The following is an 852-amino-acid chain: Exported protein YdbA (852 aa).

The N-terminal stretch at 1–21 is a signal peptide; the sequence is MQRKTLLSACIALALSGQGWA. Disordered regions lie at residues 30–50, 91–145, 307–354, 407–449, and 506–531; these read TTGE…KLSP, DDDH…FNND, TITN…QDGD, TNGG…KVIQ, and NGGT…VDGK. Positions 307-319 are enriched in low complexity; it reads TITNGGTGTQING. Polar residues predominate over residues 339–348; that stretch reads GTEINGNNGK. The segment covering 506–516 has biased composition (low complexity); sequence NGGTGTQINGN. The segment covering 517-526 has biased composition (polar residues); the sequence is DATANNSGKT.

The protein resides in the secreted. In terms of biological role, the full-length protein (which is about 2000 amino acids long) is part of the autotransporter family. This chain is Exported protein YdbA (ydbA), found in Escherichia coli (strain K12).